The following is a 461-amino-acid chain: MQVPLLRLQCGVNSYDWGRVGPESAAAKYAAATAPSDFTIEADKPYAELWMGTHPSLPSKDVETQRTLLDMVQDNLALMSPEVSERYGGKLPFLFKVLSIRKALSIQAHPNKKLAEALHARDPRNYPDDNHKPEMTIAITPFEGLCGFRPLAEIVHFLKAVAPLRYLIGVQTATDFENAVRGFENTEDPEQTKKNKVALRTLFTSLMQSASENIEQAARELVAAAQSSPETFASLVNAPDTNPTNAAELASIIIRLNEQFPNDIGLFVFFFLNFVRLEPGEAMFLKADDIHAYISGDIIECMASSDNVVRAGFTPKFKDVDTLTEMLTYSYAPIDEQKLQPTDYPYTVLNAAAYSSASDSLLYDPPIEEFSVVKTSLRRTGAKATFDPLTGPSILICTGGTGKISVGHKTEEVKEGYVFFVGANAECIIENTGTGSDEENVFTTFKAFCDLTGKEDMANGH.

Residues glutamine 107, histidine 109, glutamate 134, and histidine 291 each contribute to the Zn(2+) site. Arginine 310 is an active-site residue.

The protein belongs to the mannose-6-phosphate isomerase type 1 family. The cofactor is Zn(2+).

Its subcellular location is the cytoplasm. It carries out the reaction D-mannose 6-phosphate = D-fructose 6-phosphate. The protein operates within nucleotide-sugar biosynthesis; GDP-alpha-D-mannose biosynthesis; alpha-D-mannose 1-phosphate from D-fructose 6-phosphate: step 1/2. In terms of biological role, involved in the synthesis of the GDP-mannose and dolichol-phosphate-mannose required for a number of critical mannosyl transfer reactions. The chain is Mannose-6-phosphate isomerase (manA) from Emericella nidulans (strain FGSC A4 / ATCC 38163 / CBS 112.46 / NRRL 194 / M139) (Aspergillus nidulans).